The following is a 58-amino-acid chain: Ribosome modulation factor (58 aa).

The protein belongs to the ribosome modulation factor family.

It localises to the cytoplasm. In terms of biological role, during stationary phase, converts 70S ribosomes to an inactive dimeric form (100S ribosomes). This chain is Ribosome modulation factor, found in Shewanella amazonensis (strain ATCC BAA-1098 / SB2B).